Reading from the N-terminus, the 271-residue chain is S-adenosylmethionine decarboxylase proenzyme (271 aa).

Serine 121 acts as the Schiff-base intermediate with substrate; via pyruvic acid in catalysis. A Pyruvic acid (Ser); by autocatalysis modification is found at serine 121. The active-site Proton acceptor; for processing activity is the histidine 126. The Proton donor; for catalytic activity role is filled by cysteine 149.

Belongs to the prokaryotic AdoMetDC family. Type 2 subfamily. Heterooctamer of four alpha and four beta chains arranged as a tetramer of alpha/beta heterodimers. Pyruvate is required as a cofactor. In terms of processing, is synthesized initially as an inactive proenzyme. Formation of the active enzyme involves a self-maturation process in which the active site pyruvoyl group is generated from an internal serine residue via an autocatalytic post-translational modification. Two non-identical subunits are generated from the proenzyme in this reaction, and the pyruvate is formed at the N-terminus of the alpha chain, which is derived from the carboxyl end of the proenzyme. The post-translation cleavage follows an unusual pathway, termed non-hydrolytic serinolysis, in which the side chain hydroxyl group of the serine supplies its oxygen atom to form the C-terminus of the beta chain, while the remainder of the serine residue undergoes an oxidative deamination to produce ammonia and the pyruvoyl group blocking the N-terminus of the alpha chain.

The catalysed reaction is S-adenosyl-L-methionine + H(+) = S-adenosyl 3-(methylsulfanyl)propylamine + CO2. It functions in the pathway amine and polyamine biosynthesis; S-adenosylmethioninamine biosynthesis; S-adenosylmethioninamine from S-adenosyl-L-methionine: step 1/1. In terms of biological role, catalyzes the decarboxylation of S-adenosylmethionine to S-adenosylmethioninamine (dcAdoMet), the propylamine donor required for the synthesis of the polyamines spermine and spermidine from the diamine putrescine. The chain is S-adenosylmethionine decarboxylase proenzyme from Clostridium perfringens (strain SM101 / Type A).